The primary structure comprises 192 residues: Calcium-binding protein K (192 aa).

EF-hand domains lie at 60–95 and 96–131; these read WDEA…MAKA and PTLD…VVCC. Ca(2+) is bound by residues Asp-73, Asp-75, Asn-77, Glu-84, Asp-109, Asp-111, Ser-113, Tyr-115, and Glu-120.

It belongs to the recoverin family.

This Dictyostelium discoideum (Social amoeba) protein is Calcium-binding protein K (cbpK).